The chain runs to 83 residues: MMKKFLIALVKAYQRWISPLFPLSCRFCPTCSVYMIQAIEKHGLKGVLMGIARILRCHPLSETGDDPVPDYFSLKRKKTPLDN.

It belongs to the UPF0161 family.

Its subcellular location is the cell membrane. Could be involved in insertion of integral membrane proteins into the membrane. The protein is Putative membrane protein insertion efficiency factor of Streptococcus thermophilus (strain ATCC BAA-250 / LMG 18311).